We begin with the raw amino-acid sequence, 82 residues long: Small ribosomal subunit protein bS20 (82 aa).

This sequence belongs to the bacterial ribosomal protein bS20 family.

Binds directly to 16S ribosomal RNA. The protein is Small ribosomal subunit protein bS20 of Streptococcus pyogenes serotype M12 (strain MGAS2096).